Consider the following 107-residue polypeptide: Ferredoxin 1 (107 aa).

4Fe-4S ferredoxin-type domains are found at residues 2-30 (TFVV…YEGP) and 31-60 (NFLV…SEDE). Residues Cys9 and Cys17 each coordinate [3Fe-4S] cluster. [4Fe-4S] cluster contacts are provided by Cys21, Cys40, Cys43, and Cys46. Position 50 (Cys50) interacts with [3Fe-4S] cluster.

[4Fe-4S] cluster serves as cofactor. The cofactor is [3Fe-4S] cluster.

Functionally, ferredoxins are iron-sulfur proteins that transfer electrons in a wide variety of metabolic reactions. This chain is Ferredoxin 1 (fdxA), found in Pseudomonas putida (strain ATCC 47054 / DSM 6125 / CFBP 8728 / NCIMB 11950 / KT2440).